The sequence spans 230 residues: MMTKIKLLMLIIFYLIISASAHAAGGIALGATRIIYPADAKQTAVWIRNSHTNERFLVNSWIENSSGVKEKSFIITPPLFVSEPKSENTLRIIYTGPPLAADRESLFWMNVKTIPSVDKNALNGRNVLQLAILSRMKLFLRPIQLQELPAEAPDTLKFSRSGNYINVHNPSPFYVTLVNLQVGSQKLGNAMAAPRVNSQIPLPSGVQGKLKFQTVNDYGSVTPVREVNLN.

The N-terminal stretch at 1–23 (MMTKIKLLMLIIFYLIISASAHA) is a signal peptide.

It belongs to the periplasmic pilus chaperone family.

The protein resides in the periplasm. In terms of biological role, part of the sfmACDHF fimbrial operon. Could contribute to adhesion to various surfaces in specific environmental niches. Increases adhesion to eukaryotic T24 bladder epithelial cells in the absence of fim genes. This is Probable fimbrial chaperone SfmC (sfmC) from Escherichia coli (strain K12).